Reading from the N-terminus, the 70-residue chain is MDLIAFKNVKSKFLLMALLGYECPICGEIYIKRKSMITHLRKHNTNLKLSNCRRISLRTGEYIEIKTEEE.

A C2H2-type zinc finger spans residues 21-43 (YECPICGEIYIKRKSMITHLRKH).

This is an uncharacterized protein from Saccharolobus islandicus (Sulfolobus islandicus).